We begin with the raw amino-acid sequence, 74 residues long: Invertase 3 (74 aa).

The first 19 residues, 1–19 (MLLQAFIFLLAGFAAKISA), serve as a signal peptide directing secretion. An N-linked (GlcNAc...) asparagine glycan is attached at Asn23. Residues 39–42 (WMND) and Gln60 contribute to the substrate site. The active site involves Asp42. Asn64 is a glycosylation site (N-linked (GlcNAc...) asparagine).

This sequence belongs to the glycosyl hydrolase 32 family.

The catalysed reaction is Hydrolysis of terminal non-reducing beta-D-fructofuranoside residues in beta-D-fructofuranosides.. This Saccharomyces cerevisiae (Baker's yeast) protein is Invertase 3 (SUC3).